Reading from the N-terminus, the 297-residue chain is Protoheme IX farnesyltransferase (297 aa).

The next 9 helical transmembrane spans lie at 23-43, 49-69, 90-110, 117-137, 144-164, 171-191, 215-235, 238-258, and 277-297; these read VTQL…PGLP, VFGT…NCLI, ISAA…MLVL, LTMW…TVIL, NIVI…AAVA, AWVL…ALAL, RLHI…PYII, SGLL…AYAW, and ILYL…GLLA.

It belongs to the UbiA prenyltransferase family. Protoheme IX farnesyltransferase subfamily.

The protein resides in the cell inner membrane. It catalyses the reaction heme b + (2E,6E)-farnesyl diphosphate + H2O = Fe(II)-heme o + diphosphate. It functions in the pathway porphyrin-containing compound metabolism; heme O biosynthesis; heme O from protoheme: step 1/1. Converts heme B (protoheme IX) to heme O by substitution of the vinyl group on carbon 2 of heme B porphyrin ring with a hydroxyethyl farnesyl side group. The sequence is that of Protoheme IX farnesyltransferase from Bordetella petrii (strain ATCC BAA-461 / DSM 12804 / CCUG 43448).